The following is a 167-amino-acid chain: Novel acetylcholine receptor chaperone (167 aa).

The Cytoplasmic segment spans residues 1–5; the sequence is MASPR. Residues 6-26 traverse the membrane as a helical segment; it reads TITIMALSVALGLFFVFMGTI. Over 27 to 61 the chain is Lumenal; that stretch reads KLTPRLSKDAYSEMKRAYKSYVRALPLLKKMGINS. The segment at 43–54 is interaction with NGFR; that stretch reads AYKSYVRALPLL. Residues 62–82 traverse the membrane as a helical segment; that stretch reads ILLRKSIGALEVACGIVMTLV. Topologically, residues 83–88 are cytoplasmic; sequence PGRPKD. A helical transmembrane segment spans residues 89–109; that stretch reads VANFFLLLLVLAVLFFHQLVG. The Lumenal portion of the chain corresponds to 110–114; sequence DPLKR. Residues 115 to 132 form a helical membrane-spanning segment; that stretch reads YAHALVFGILLTCRLLIA. Topologically, residues 133–167 are cytoplasmic; sequence RKPEDRSSEKKALPESAEEQPSLYEKAPQGKVKVS. Residues 135–145 show a composition bias toward basic and acidic residues; sequence PEDRSSEKKAL. Positions 135-167 are disordered; the sequence is PEDRSSEKKALPESAEEQPSLYEKAPQGKVKVS.

Belongs to the DoxX family. In terms of assembly, may interact with NGFR. Interacts with RPN1, RPN2 and CANX. As to expression, brain (at protein level). Expressed in the spinal cord dorsal horn (at protein level).

Its subcellular location is the peroxisome membrane. The protein resides in the cytoplasmic vesicle. The protein localises to the endoplasmic reticulum membrane. Molecular chaperone which mediates the proper assembly and functional expression of the nicotinic acetylcholine receptors (nAChRs) throughout the brain. Essential for the proper folding, assembly, function and surface trafficking of alpha-7 (CHRNA7), alpha-4-beta-2, alpha-3-beta-2 and alpha-3-beta-4 receptors. Stably associates with ribophorin-1 (RPN1) and ribophorin-2 (RPN2) (components of the oligosaccharyl transferase (OST) complex) and with calnexin (CANX), both of which are critical for NACHO-mediated effects on CHRNA7 assembly and function. Facilitates the proper folding and assembly of alpha-6-beta-2 and alpha-6-beta-2-beta-3 receptors and acts at early stages of the nAChRs subunit assembly. Promotes the expression of the alpha-4(2):beta-2(3) stoichiometric form over the alpha-4(3):beta-2(2) form. The chain is Novel acetylcholine receptor chaperone from Mus musculus (Mouse).